Here is an 88-residue protein sequence, read N- to C-terminus: Small ribosomal subunit protein uS17 (88 aa).

Belongs to the universal ribosomal protein uS17 family. Part of the 30S ribosomal subunit.

One of the primary rRNA binding proteins, it binds specifically to the 5'-end of 16S ribosomal RNA. This is Small ribosomal subunit protein uS17 from Pseudomonas fluorescens (strain SBW25).